We begin with the raw amino-acid sequence, 411 residues long: Nuclear receptor subfamily 2 group F member 1-A (411 aa).

The interval 1-68 (MAMVVSVWRD…AGDKGSQNSG (68 aa)) is disordered. Positions 24–46 (NPAAQPAREQQQAASAAPHTPQT) are enriched in low complexity. Residues 73–148 (HIECVVCGDK…VGMRREAVQR (76 aa)) constitute a DNA-binding region (nuclear receptor). 2 consecutive NR C4-type zinc fingers follow at residues 76-96 (CVVC…CEGC) and 112-136 (CRAN…LKKC). Residues 174 to 400 (YLSGYISLLL…TLIRDMLLSG (227 aa)) enclose the NR LBD domain.

It belongs to the nuclear hormone receptor family. NR2 subfamily. As to expression, first expressed in 11-12 hour embryos. In the rostral brain of 13 hour embryos, expressed within the anterior half of the midbrain and the posterior part of the diencephalon. In the presumptive hindbrain, expressed in a segment-like stripe in the anterior region, resembling the presumptive rhombomere units of the hindbrain. Also detected in the intermediate mesoderm, posterior to the first somite. As somitogenesis proceeds, expression extends posteriorly and flanks the 10 most anterior somites. Expression changes extensively both in level and expansion of domains between 13 and 20 hours. In the rostral brain, expression extends to include a major part of the diencephalon and a caudal portion of the telencephalon. Within the hindbrain, strongly expressed in the two most anterior rhombomeres, and a lower but uniform expression is seen to extend throughout rhombomere 7. In 28 hour embryos, higher and more uniform expression is seen in both rostral and hindbrain areas. Also expressed in the retina of the eye.

Its subcellular location is the nucleus. Functionally, putative transcription factor that is required in photoreceptor cells precursors during eye development. The polypeptide is Nuclear receptor subfamily 2 group F member 1-A (nr2f1a) (Danio rerio (Zebrafish)).